Consider the following 428-residue polypeptide: Serine--tRNA ligase (428 aa).

Residue 231 to 233 coordinates L-serine; the sequence is TAE. 262–264 provides a ligand contact to ATP; sequence RSE. Glutamate 285 serves as a coordination point for L-serine. 349 to 352 contributes to the ATP binding site; the sequence is EISS. Serine 385 provides a ligand contact to L-serine.

It belongs to the class-II aminoacyl-tRNA synthetase family. Type-1 seryl-tRNA synthetase subfamily. In terms of assembly, homodimer. The tRNA molecule binds across the dimer.

Its subcellular location is the cytoplasm. The enzyme catalyses tRNA(Ser) + L-serine + ATP = L-seryl-tRNA(Ser) + AMP + diphosphate + H(+). The catalysed reaction is tRNA(Sec) + L-serine + ATP = L-seryl-tRNA(Sec) + AMP + diphosphate + H(+). It functions in the pathway aminoacyl-tRNA biosynthesis; selenocysteinyl-tRNA(Sec) biosynthesis; L-seryl-tRNA(Sec) from L-serine and tRNA(Sec): step 1/1. Functionally, catalyzes the attachment of serine to tRNA(Ser). Is also able to aminoacylate tRNA(Sec) with serine, to form the misacylated tRNA L-seryl-tRNA(Sec), which will be further converted into selenocysteinyl-tRNA(Sec). This Staphylococcus epidermidis (strain ATCC 35984 / DSM 28319 / BCRC 17069 / CCUG 31568 / BM 3577 / RP62A) protein is Serine--tRNA ligase.